We begin with the raw amino-acid sequence, 884 residues long: Nonsense-mediated mRNA decay factor EBS1 (884 aa).

Disordered regions lie at residues 596-645 (NSMK…PTMG) and 755-774 (QGGL…NSAY). The segment covering 633–645 (RSSSLDSFSPTMG) has biased composition (polar residues). Positions 760–772 (SSQQPSSMSSLNS) are enriched in low complexity.

It belongs to the EST1 family. In terms of assembly, interacts with NMD helicase UPF1. Interacts with CDC33.

The protein localises to the nucleus. Its subcellular location is the chromosome. The protein resides in the telomere. It is found in the cytoplasm. It localises to the P-body. Its function is as follows. Plays a role in nonsense-mediated mRNA decay (NMD). Recruits UPF1 to cytoplasmic mRNA decay bodies (P-bodies). Negative regulator of gene expression. Inhibits translation most likely through effects on eIF-4E (CDC33). Involved in telomere maintenance. This Saccharomyces cerevisiae (strain ATCC 204508 / S288c) (Baker's yeast) protein is Nonsense-mediated mRNA decay factor EBS1.